The sequence spans 406 residues: S-adenosylmethionine synthase (406 aa).

H5 provides a ligand contact to ATP. D7 is a Mg(2+) binding site. E33 serves as a coordination point for K(+). E46 and Q89 together coordinate L-methionine. Residues 89–99 (QSPDIAQGVDT) form a flexible loop region. Residues 164 to 166 (DGK), 240 to 241 (KF), D249, 255 to 256 (RK), A272, and K276 each bind ATP. D249 lines the L-methionine pocket. Position 280 (K280) interacts with L-methionine.

It belongs to the AdoMet synthase family. As to quaternary structure, homotetramer; dimer of dimers. Mg(2+) is required as a cofactor. Requires K(+) as cofactor.

The protein resides in the cytoplasm. The enzyme catalyses L-methionine + ATP + H2O = S-adenosyl-L-methionine + phosphate + diphosphate. The protein operates within amino-acid biosynthesis; S-adenosyl-L-methionine biosynthesis; S-adenosyl-L-methionine from L-methionine: step 1/1. Its function is as follows. Catalyzes the formation of S-adenosylmethionine (AdoMet) from methionine and ATP. The overall synthetic reaction is composed of two sequential steps, AdoMet formation and the subsequent tripolyphosphate hydrolysis which occurs prior to release of AdoMet from the enzyme. This chain is S-adenosylmethionine synthase, found in Synechococcus sp. (strain ATCC 27144 / PCC 6301 / SAUG 1402/1) (Anacystis nidulans).